Consider the following 401-residue polypeptide: Probable plasmid-partitioning protein ParB (401 aa).

Residues 232-272 (KTRGKENARDKAAAVKEEVKPSKKPKADNGEKTPKGRSHEE) form a disordered region.

This sequence belongs to the ParB family.

The chain is Probable plasmid-partitioning protein ParB from Xylella fastidiosa (strain 9a5c).